The chain runs to 271 residues: MLVVAAMRVWNPEEGWANRVGRKREGKIVEILRRVTMTAHGLSHFPRQLLRMPRAALRKPNPALDLDSWLKTPEDLPATINSQTLFGNDQPLEIEVGSGKGLFIQTESDRRPEHNYFGIEIARKYAAHAAARLAKRERANAKMLAGDATPLFAVTDEGKRIEDGSLDGVHVYFPDPWWKKRHRKRRVLSHDNILNFSRCLRVGGRLHFWTDVLDYFELTVELIAEIAPELGVPLPETQRESTHDLDFHTHFERRSRKMGIPVYRVCYRKRS.

4 residues coordinate S-adenosyl-L-methionine: E95, E120, D147, and D175. D175 is a catalytic residue. Substrate contacts are provided by residues K179, D211, and 249–252 (THFE).

The protein belongs to the class I-like SAM-binding methyltransferase superfamily. TrmB family.

It catalyses the reaction guanosine(46) in tRNA + S-adenosyl-L-methionine = N(7)-methylguanosine(46) in tRNA + S-adenosyl-L-homocysteine. Its pathway is tRNA modification; N(7)-methylguanine-tRNA biosynthesis. Functionally, catalyzes the formation of N(7)-methylguanine at position 46 (m7G46) in tRNA. The polypeptide is tRNA (guanine-N(7)-)-methyltransferase (Rhodopirellula baltica (strain DSM 10527 / NCIMB 13988 / SH1)).